The primary structure comprises 77 residues: Small integral membrane protein 5 (77 aa).

The chain crosses the membrane as a helical span at residues 32-52; that stretch reads IVAFSVIILFTATVLLLLLIA.

Its subcellular location is the membrane. This is Small integral membrane protein 5 (SMIM5) from Homo sapiens (Human).